The primary structure comprises 99 residues: MSSNEKIFSVLRAPRVSEKTARLQEISNQYVFEVSNEATKADVKAAVEQLFDVKVKAVNVVNVKGKSKSFRNRAGNRGNWRKAYVRLVDGQSIDVTAKA.

This sequence belongs to the universal ribosomal protein uL23 family. Part of the 50S ribosomal subunit. Contacts protein L29, and trigger factor when it is bound to the ribosome.

One of the early assembly proteins it binds 23S rRNA. One of the proteins that surrounds the polypeptide exit tunnel on the outside of the ribosome. Forms the main docking site for trigger factor binding to the ribosome. The sequence is that of Large ribosomal subunit protein uL23 from Xanthomonas axonopodis pv. citri (strain 306).